Here is a 294-residue protein sequence, read N- to C-terminus: DEP domain-containing protein 4 (294 aa).

The DEP domain occupies 71-162 (LQAQVEIKRR…SNISLYRFLG (92 aa)).

This chain is DEP domain-containing protein 4 (DEPDC4), found in Homo sapiens (Human).